The following is a 520-amino-acid chain: Cholesterol side-chain cleavage enzyme, mitochondrial (520 aa).

The N-terminal 39 residues, 1–39, are a transit peptide targeting the mitochondrion; the sequence is MLARGLPFRSALVKACPPLLNTGREGWGHHRVGTGEGAG. Residues 27–47 form a disordered region; that stretch reads WGHHRVGTGEGAGISTRTPRP. Cysteine 461 contacts heme.

This sequence belongs to the cytochrome P450 family. In terms of assembly, interacts with FDX1/adrenodoxin. It depends on heme as a cofactor.

The protein resides in the mitochondrion inner membrane. It catalyses the reaction 6 reduced [adrenodoxin] + cholesterol + 3 O2 + 6 H(+) = 4-methylpentanal + pregnenolone + 6 oxidized [adrenodoxin] + 4 H2O. It carries out the reaction 2 reduced [adrenodoxin] + cholesterol + O2 + 2 H(+) = (22R)-hydroxycholesterol + 2 oxidized [adrenodoxin] + H2O. The enzyme catalyses (22R)-hydroxycholesterol + 2 reduced [adrenodoxin] + O2 + 2 H(+) = (20R,22R)-20,22-dihydroxycholesterol + 2 oxidized [adrenodoxin] + H2O. The catalysed reaction is (20R,22R)-20,22-dihydroxycholesterol + 2 reduced [adrenodoxin] + O2 + 2 H(+) = 4-methylpentanal + pregnenolone + 2 oxidized [adrenodoxin] + 2 H2O. It functions in the pathway lipid metabolism; C21-steroid hormone metabolism. Its pathway is steroid metabolism; cholesterol metabolism. Its function is as follows. A cytochrome P450 monooxygenase that catalyzes the side-chain hydroxylation and cleavage of cholesterol to pregnenolone, the precursor of most steroid hormones. Catalyzes three sequential oxidation reactions of cholesterol, namely the hydroxylation at C22 followed with the hydroxylation at C20 to yield 20R,22R-hydroxycholesterol that is further cleaved between C20 and C22 to yield the C21-steroid pregnenolone and 4-methylpentanal. Mechanistically, uses molecular oxygen inserting one oxygen atom into a substrate and reducing the second into a water molecule. Two electrons are provided by NADPH via a two-protein mitochondrial transfer system comprising flavoprotein FDXR (adrenodoxin/ferredoxin reductase) and nonheme iron-sulfur protein FDX1 or FDX2 (adrenodoxin/ferredoxin). This is Cholesterol side-chain cleavage enzyme, mitochondrial from Ovis aries (Sheep).